Reading from the N-terminus, the 64-residue chain is Large ribosomal subunit protein bL35 (64 aa).

The segment at 1–28 (MPKMKTHSGAKKRFKLTGSGKLKRQQAN) is disordered.

It belongs to the bacterial ribosomal protein bL35 family.

In Renibacterium salmoninarum (strain ATCC 33209 / DSM 20767 / JCM 11484 / NBRC 15589 / NCIMB 2235), this protein is Large ribosomal subunit protein bL35.